A 576-amino-acid chain; its full sequence is F-actin capping regulator BSP1 (576 aa).

Residues 24–50 (RYSNIPSSKPAGEALSPVRSHNSGEYR) form a disordered region. Serine 46, serine 79, and serine 88 each carry phosphoserine. Disordered stretches follow at residues 132 to 160 (NDSN…PREK) and 173 to 316 (GRAD…KRIP). Serine 185 bears the Phosphoserine mark. Positions 191–206 (TRRDHIKITDGNEEKP) are enriched in basic and acidic residues. Position 220 is a phosphoserine (serine 220). Composition is skewed to polar residues over residues 243–255 (SRST…LSSL) and 264–279 (KSYN…TVKS). A compositionally biased stretch (pro residues) spans 304–313 (KPTPPSPPAK). Serine 309 and serine 320 each carry phosphoserine. An interaction with F-actin region spans residues 408 to 470 (SIPEAIKGIQ…LSLRNNLKKR (63 aa)). The tract at residues 541–576 (DKYTTSRDETVKETKPLVHPNKNRTRGPRRKLPTRV) is disordered. A compositionally biased stretch (basic and acidic residues) spans 544-556 (TTSRDETVKETKP). The segment at 547–576 (RDETVKETKPLVHPNKNRTRGPRRKLPTRV) is interaction with the F-actin capping complex. A compositionally biased stretch (basic residues) spans 561 to 576 (NKNRTRGPRRKLPTRV).

Interacts (via C-terminus) with the CAP1-CAP2 F-actin capping protein complex. Interacts with INP52 (via SAC domain); the interaction is direct. Interacts with INP53 (via SAC domain); the interaction is direct. Interacts with RVS167. Interacts with SLA1. Post-translationally, phosphorylated by CDC28.

The protein localises to the cytoplasm. The protein resides in the cytoskeleton. It localises to the actin patch. It is found in the cell membrane. Functionally, recruits the capping protein complex to actin patches and the actomyosin contractile ring, and/or stabilizes their interaction. May serve as an adapter to link INP52 and INP53 to the cortical actin cytoskeleton. Binds F-actin. This is F-actin capping regulator BSP1 (BSP1) from Saccharomyces cerevisiae (strain ATCC 204508 / S288c) (Baker's yeast).